A 738-amino-acid polypeptide reads, in one-letter code: Junction plakoglobin (738 aa).

12 ARM repeats span residues 128 to 167, 168 to 211, 212 to 251, 254 to 293, 294 to 337, 338 to 377, 379 to 416, 419 to 460, 466 to 506, 508 to 547, 570 to 609, and 611 to 657; these read NYQD…QLSK, KEAS…LSHH, REGL…NLLL, EGAK…LLAY, GNQE…LSVC, PSNK…NLSD, ATKQ…NLTC, GRNK…HLTS, EVAQ…NLAL, PANH…QPYT, PVNR…ELAQ, and KEAA…ADYR.

The protein belongs to the beta-catenin family. As to quaternary structure, homodimer.

It is found in the cell junction. The protein localises to the adherens junction. Its subcellular location is the desmosome. The protein resides in the cytoplasm. It localises to the cytoskeleton. It is found in the membrane. Functionally, common junctional plaque protein. The membrane-associated plaques are architectural elements in an important strategic position to influence the arrangement and function of both the cytoskeleton and the cells within the tissue. The presence of plakoglobin in both the desmosomes and in the intermediate junctions suggests that it plays a central role in the structure and function of submembranous plaques. The chain is Junction plakoglobin (jup) from Xenopus laevis (African clawed frog).